The sequence spans 177 residues: Thymidine kinase (177 aa).

11–18 (GPMFSGKS) contacts ATP. Glu-83 functions as the Proton acceptor in the catalytic mechanism. Residue Phe-113 coordinates substrate. Zn(2+) is bound by residues Cys-138 and Cys-141. 157–161 (IELIG) serves as a coordination point for substrate. Zn(2+)-binding residues include Cys-170 and Cys-173.

It belongs to the thymidine kinase family.

The enzyme catalyses thymidine + ATP = dTMP + ADP + H(+). The polypeptide is Thymidine kinase (TK) (Sheeppox virus (strain KS-1) (SPPV)).